A 346-amino-acid chain; its full sequence is Small ribosomal subunit biogenesis GTPase RsgA (346 aa).

Positions 1-26 (MAKRKLTQNQTRRIQSNNAKTLHRHK) are disordered. Positions 7–20 (TQNQTRRIQSNNAK) are enriched in polar residues. Positions 103 to 271 (ENEISRPDYY…LIDSPGIREF (169 aa)) constitute a CP-type G domain. GTP is bound by residues 159–162 (NKVD) and 213–221 (GQSGVGKSS). The Zn(2+) site is built by cysteine 295, cysteine 300, histidine 302, and cysteine 308.

The protein belongs to the TRAFAC class YlqF/YawG GTPase family. RsgA subfamily. Monomer. Associates with 30S ribosomal subunit, binds 16S rRNA. Zn(2+) is required as a cofactor.

It localises to the cytoplasm. Functionally, one of several proteins that assist in the late maturation steps of the functional core of the 30S ribosomal subunit. Helps release RbfA from mature subunits. May play a role in the assembly of ribosomal proteins into the subunit. Circularly permuted GTPase that catalyzes slow GTP hydrolysis, GTPase activity is stimulated by the 30S ribosomal subunit. This is Small ribosomal subunit biogenesis GTPase RsgA from Haemophilus influenzae (strain PittEE).